The following is a 259-amino-acid chain: 5'-nucleotidase SurE (259 aa).

4 residues coordinate a divalent metal cation: Asp8, Asp9, Ser40, and Asn92.

This sequence belongs to the SurE nucleotidase family. Requires a divalent metal cation as cofactor.

Its subcellular location is the cytoplasm. The catalysed reaction is a ribonucleoside 5'-phosphate + H2O = a ribonucleoside + phosphate. Nucleotidase that shows phosphatase activity on nucleoside 5'-monophosphates. This is 5'-nucleotidase SurE from Xanthomonas campestris pv. campestris (strain B100).